The sequence spans 585 residues: Arginine--tRNA ligase (585 aa).

Residues 131-141 carry the 'HIGH' region motif; that stretch reads ANPTGPMHVGH.

The protein belongs to the class-I aminoacyl-tRNA synthetase family. As to quaternary structure, monomer.

The protein localises to the cytoplasm. The catalysed reaction is tRNA(Arg) + L-arginine + ATP = L-arginyl-tRNA(Arg) + AMP + diphosphate. The chain is Arginine--tRNA ligase from Agrobacterium fabrum (strain C58 / ATCC 33970) (Agrobacterium tumefaciens (strain C58)).